A 329-amino-acid chain; its full sequence is MQNLKEITEQARAALDELHDKGLDALEAFRVEYFGKKGHFTQLMQSLRNVAAEERPAVGAKINEAKQAVLDILNAKKEAFEKAALNAQLEKERIDVSLPGRKVELGGLHPVSLTIERVTKFFSELGFSVESGPEIESDYYNFDALNIPKHHPARADHDTFWFNPELLLRTQTSGVQIRTMEKKQPPIRIMVPGKVYRNDYDQTHTPMFHQIELLYEDKKVNFTELKGVLYDFLRAFFEEDLQVRFRPSYFPFTEPSAEVDIMGKNGKWLEVLGCGMVHPNVLRSVGIDPNEYSGFAAGMGVERLTMLRYNVTDLRSFFENDLRFLKQFK.

Glutamate 254 provides a ligand contact to Mg(2+).

The protein belongs to the class-II aminoacyl-tRNA synthetase family. Phe-tRNA synthetase alpha subunit type 1 subfamily. Tetramer of two alpha and two beta subunits. Requires Mg(2+) as cofactor.

Its subcellular location is the cytoplasm. It catalyses the reaction tRNA(Phe) + L-phenylalanine + ATP = L-phenylalanyl-tRNA(Phe) + AMP + diphosphate + H(+). The sequence is that of Phenylalanine--tRNA ligase alpha subunit from Mannheimia succiniciproducens (strain KCTC 0769BP / MBEL55E).